The following is a 210-amino-acid chain: Signal peptidase complex catalytic subunit SEC11 (210 aa).

At 1–14 the chain is on the cytoplasmic side; the sequence is MLSSLSPHLSNVRQ. A helical; Signal-anchor for type II membrane protein transmembrane segment spans residues 15-31; the sequence is TLTQVLNFALVLSTAFM. At 32-210 the chain is on the lumenal side; the sequence is MWKALSIYTN…MGVMVILQRE (179 aa). N-linked (GlcNAc...) asparagine glycosylation is present at asparagine 41. Active-site charge relay system residues include serine 53 and histidine 92. A compositionally biased stretch (basic and acidic residues) spans 101–110; sequence DARDPKEGGG. Residues 101–124 are disordered; the sequence is DARDPKEGGGKKGKSASGTGKKES. Aspartate 152 serves as the catalytic Charge relay system. The C-terminal short (CTS) helix stretch occupies residues 196–207; that stretch reads VLLGLMGVMVIL.

Belongs to the peptidase S26B family. As to quaternary structure, component of the signal peptidase complex (SPC) composed of a catalytic subunit SEC11 and three accessory subunits SPC1, SPC2 and SPC3. The complex induces a local thinning of the ER membrane which is used to measure the length of the signal peptide (SP) h-region of protein substrates. This ensures the selectivity of the complex towards h-regions shorter than 18-20 amino acids. SPC associates with the translocon complex.

The protein localises to the endoplasmic reticulum membrane. It carries out the reaction Cleavage of hydrophobic, N-terminal signal or leader sequences from secreted and periplasmic proteins.. Catalytic component of the signal peptidase complex (SPC) which catalyzes the cleavage of N-terminal signal sequences from nascent proteins as they are translocated into the lumen of the endoplasmic reticulum. Specifically cleaves N-terminal signal peptides that contain a hydrophobic alpha-helix (h-region) shorter than 18-20 amino acids. This chain is Signal peptidase complex catalytic subunit SEC11 (SEC11), found in Uncinocarpus reesii (strain UAMH 1704).